A 405-amino-acid polypeptide reads, in one-letter code: tRNA N6-adenosine threonylcarbamoyltransferase, mitochondrial (405 aa).

The transit peptide at 1-19 (MAKYISNLSRIAVVRGRVS) directs the protein to the mitochondrion. The a divalent metal cation site is built by H138 and H142. Substrate contacts are provided by residues 160-164 (LISGG), D193, G213, E217, 320-321 (SN), and T348. Position 349 (D349) interacts with a divalent metal cation.

The protein belongs to the KAE1 / TsaD family. Monomer. It depends on a divalent metal cation as a cofactor.

Its subcellular location is the mitochondrion. The enzyme catalyses L-threonylcarbamoyladenylate + adenosine(37) in tRNA = N(6)-L-threonylcarbamoyladenosine(37) in tRNA + AMP + H(+). Required for the formation of a threonylcarbamoyl group on adenosine at position 37 (t(6)A37) in mitochondrial tRNAs that read codons beginning with adenine. Probably involved in the transfer of the threonylcarbamoyl moiety of threonylcarbamoyl-AMP (TC-AMP) to the N6 group of A37. Involved in mitochondrial genome maintenance. The chain is tRNA N6-adenosine threonylcarbamoyltransferase, mitochondrial from Xenopus tropicalis (Western clawed frog).